Reading from the N-terminus, the 906-residue chain is Cadherin-2 (906 aa).

Residues 1-25 (MCRIVGAPRTLLPLLAALLQASVDA) form the signal peptide. The propeptide occupies 26–159 (SGEISLCKTG…HNGYLQRQKR (134 aa)). A phosphoserine mark is found at Ser-96 and Ser-135. Cadherin domains follow at residues 160 to 267 (DWVI…RPEF), 268 to 392 (LHQV…GEVP), 393 to 497 (ENRV…NPYF), 498 to 603 (APNP…DNAP), and 604 to 714 (QVLP…DVDR). The Extracellular segment spans residues 160–724 (DWVIPPINLP…IVGAGLGTGA (565 aa)). Residue Glu-170 coordinates Ca(2+). N-linked (GlcNAc...) asparagine glycosylation is present at Asn-190. Ca(2+)-binding residues include Asp-226, Glu-228, Asp-259, Met-260, Asn-261, Asp-262, and Asn-263. A glycan (N-linked (GlcNAc...) asparagine) is linked at Asn-273. 3 residues coordinate Ca(2+): Asp-293, Asp-295, and Asn-301. The N-linked (GlcNAc...) asparagine glycan is linked to Asn-325. Asp-353 contacts Ca(2+). N-linked (GlcNAc...) asparagine glycans are attached at residues Asn-357, Asn-402, Asn-572, Asn-622, Asn-651, and Asn-692. The helical transmembrane segment at 725-746 (IIAILLCIIILLILVLMFVVWM) threads the bilayer. Residues 747-906 (KRRDKERQAK…LADMYGGGDD (160 aa)) are Cytoplasmic-facing. Residues 863-880 (SGSTAGSLSSLNSSSSGG) are compositionally biased toward low complexity. The segment at 863–884 (SGSTAGSLSSLNSSSSGGEQDY) is disordered.

In terms of assembly, homodimer (via extracellular region). Can also form heterodimers with other cadherins (via extracellular region). Dimerization occurs in trans, i.e. with a cadherin chain from another cell. Interacts with CDCP1. Interacts with PCDH8; this complex may also include TAOK2. The interaction with PCDH8 may lead to internalization through TAOK2/p38 MAPK pathway. Identified in a complex containing FGFR4, NCAM1, CDH2, PLCG1, FRS2, SRC, SHC1, GAP43 and CTTN. May interact with OBSCN (via protein kinase domain 2). Interacts with FBXO45. Post-translationally, cleaved by MMP24. Ectodomain cleavage leads to the generation of a soluble 90 kDa N-terminal soluble fragment and a 45 kDa membrane-bound C-terminal fragment 1 (CTF1), which is further cleaved by gamma-secretase into a 35 kDa. Cleavage in neural stem cells by MMP24 affects CDH2-mediated anchorage of neural stem cells to ependymocytes in the adult subependymal zone, leading to modulate neural stem cell quiescence. In terms of processing, may be phosphorylated by OBSCN. Detected in liver, kidney, heart and brain capillaries.

The protein resides in the cell membrane. Its subcellular location is the sarcolemma. The protein localises to the cell junction. It localises to the cell surface. It is found in the desmosome. The protein resides in the adherens junction. Its function is as follows. Calcium-dependent cell adhesion protein; preferentially mediates homotypic cell-cell adhesion by dimerization with a CDH2 chain from another cell. Cadherins may thus contribute to the sorting of heterogeneous cell types. Acts as a regulator of neural stem cells quiescence by mediating anchorage of neural stem cells to ependymocytes in the adult subependymal zone: upon cleavage by MMP24, CDH2-mediated anchorage is affected, leading to modulate neural stem cell quiescence. Plays a role in cell-to-cell junction formation between pancreatic beta cells and neural crest stem (NCS) cells, promoting the formation of processes by NCS cells. Required for proper neurite branching. Required for pre- and postsynaptic organization. CDH2 may be involved in neuronal recognition mechanism. In hippocampal neurons, may regulate dendritic spine density. In Bos taurus (Bovine), this protein is Cadherin-2 (CDH2).